We begin with the raw amino-acid sequence, 100 residues long: NADH-quinone oxidoreductase subunit K (100 aa).

The next 3 membrane-spanning stretches (helical) occupy residues 4-24 (FEYY…GVII), 28-48 (IIAM…AFVA), and 61-81 (FVFF…GLII).

This sequence belongs to the complex I subunit 4L family. NDH-1 is composed of 14 different subunits. Subunits NuoA, H, J, K, L, M, N constitute the membrane sector of the complex.

The protein localises to the cell inner membrane. It catalyses the reaction a quinone + NADH + 5 H(+)(in) = a quinol + NAD(+) + 4 H(+)(out). In terms of biological role, NDH-1 shuttles electrons from NADH, via FMN and iron-sulfur (Fe-S) centers, to quinones in the respiratory chain. The immediate electron acceptor for the enzyme in this species is believed to be ubiquinone. Couples the redox reaction to proton translocation (for every two electrons transferred, four hydrogen ions are translocated across the cytoplasmic membrane), and thus conserves the redox energy in a proton gradient. The protein is NADH-quinone oxidoreductase subunit K of Sulfurihydrogenibium sp. (strain YO3AOP1).